The primary structure comprises 354 residues: Biotin synthase (354 aa).

Residues 40–258 (NEVQVSTLLS…IAVARILMPR (219 aa)) enclose the Radical SAM core domain. [4Fe-4S] cluster-binding residues include Cys-55, Cys-59, and Cys-62. Residues Cys-99, Cys-130, Cys-190, and Arg-262 each coordinate [2Fe-2S] cluster.

It belongs to the radical SAM superfamily. Biotin synthase family. Homodimer. [4Fe-4S] cluster is required as a cofactor. The cofactor is [2Fe-2S] cluster.

It carries out the reaction (4R,5S)-dethiobiotin + (sulfur carrier)-SH + 2 reduced [2Fe-2S]-[ferredoxin] + 2 S-adenosyl-L-methionine = (sulfur carrier)-H + biotin + 2 5'-deoxyadenosine + 2 L-methionine + 2 oxidized [2Fe-2S]-[ferredoxin]. It participates in cofactor biosynthesis; biotin biosynthesis; biotin from 7,8-diaminononanoate: step 2/2. Functionally, catalyzes the conversion of dethiobiotin (DTB) to biotin by the insertion of a sulfur atom into dethiobiotin via a radical-based mechanism. This Hahella chejuensis (strain KCTC 2396) protein is Biotin synthase.